The chain runs to 286 residues: Probable endonuclease 4 (286 aa).

Zn(2+) contacts are provided by H72, H112, E147, D181, H184, H215, D228, H230, and E260.

It belongs to the AP endonuclease 2 family. The cofactor is Zn(2+).

The enzyme catalyses Endonucleolytic cleavage to 5'-phosphooligonucleotide end-products.. In terms of biological role, endonuclease IV plays a role in DNA repair. It cleaves phosphodiester bonds at apurinic or apyrimidinic (AP) sites, generating a 3'-hydroxyl group and a 5'-terminal sugar phosphate. In Mycoplasma pneumoniae (strain ATCC 29342 / M129 / Subtype 1) (Mycoplasmoides pneumoniae), this protein is Probable endonuclease 4.